A 356-amino-acid polypeptide reads, in one-letter code: Heat-inducible transcription repressor HrcA (356 aa).

This sequence belongs to the HrcA family.

Negative regulator of class I heat shock genes (grpE-dnaK-dnaJ and groELS operons). Prevents heat-shock induction of these operons. The sequence is that of Heat-inducible transcription repressor HrcA from Bartonella tribocorum (strain CIP 105476 / IBS 506).